A 229-amino-acid polypeptide reads, in one-letter code: Histone H3-like centromeric protein CSE4 (229 aa).

The span at 1–35 (MSSKQQWVSSAIQSDSSGRSLSNVNRLAGDQQSIN) shows a compositional bias: polar residues. Residues 1–78 (MSSKQQWVSS…DIETDYEDQA (78 aa)) form a disordered region. The segment covering 53–68 (PRREERRRYESSKSDL) has biased composition (basic and acidic residues). A Nuclear localization signal motif is present at residues 115–132 (KRREKQRKQSLKRVEKKY). An H3-like region spans residues 132–229 (YTPSELALYE…LARRIRGQFI (98 aa)).

This sequence belongs to the histone H3 family. In terms of assembly, component of centromeric nucleosomes, where DNA is wrapped around a histone octamer core. The octamer contains two molecules each of H2A, H2B, CSE4/CENPA and H4 assembled in one CSE4-H4 heterotetramer and two H2A-H2B heterodimers. Interacts with the inner kinetochore. Interacts with the central kinetochore protein CTF19. Interacts with YTA7. Post-translationally, ubiquitinated. Is degraded through ubiquitin-mediated proteolysis when not protected by its association to the kinetochore.

The protein resides in the nucleus. It localises to the chromosome. The protein localises to the centromere. Its function is as follows. Histone H3-like nucleosomal protein that is specifically found in centromeric nucleosomes. Replaces conventional H3 in the nucleosome core of centromeric chromatin that serves as an assembly site for the inner kinetochore. Required for recruitment and assembly of kinetochore proteins, mitotic progression and chromosome segregation. May serve as an epigenetic mark that propagates centromere identity through replication and cell division. Required for functional chromatin architecture at the yeast 2-micron circle partitioning locus and promotes equal plasmid segregation. The polypeptide is Histone H3-like centromeric protein CSE4 (CSE4) (Saccharomyces cerevisiae (strain ATCC 204508 / S288c) (Baker's yeast)).